Here is a 691-residue protein sequence, read N- to C-terminus: MLKMVTFFQGFPGQQSVPGTLNFAVSPQKPRSTSEAESETSMSEASSEDLMPSPEAPDGEEESAKKKEKKSKGLANMFSVFTKGKKKKKDQPRLSDLEVQPKPRPELDGPLPTVEELKEALEHGRLEVAWQVLALERQLEAAAAAGGMSNEELVWRQSKVEALYVLLCDQVLGVLRRPLEAAPERLSQALAVVSQEELEDRRASGGPLAAALEATRPRRWLQRWRGVVAEVAAERLDAQPATAPEGRSEAESRFLHMGRTMKEDLEVVVERLKPLFPDEFNVVRTYAESYHYHFASHLCALAQFELCERDTYLLLLWVQNLYPNDILNSPKLAQELQGVGLGSLLPPKQIRLLEAMFLSNEVTSVKQLMARALELESQRWTQDVAPQSLDGHCHSELAIDILQIISQGQTKAENITSDVGMQIKQLLLVELAALLRSYQRAFDEFLEKSKLLRNYRVNIMANINNCLFFWTSVEQKWQISHDSLNRLLEPLKDLKAHGFDTLLQSLFLDLKPLFKKFTQTRWANPVETLEEIITTVSSSLPEFSELQDCFREELMETVHLHLVKEYIIRLCKRRLVLKTAEQQQQLARHILANADAIQGFCTENGSTATWLHRALPMIAEIIRLQDSSAIKIEVATYATWYPDFSKGHLNAILAIKGNLPSSEVRSIRNILDINTGVQEPPRPLFSLIKVT.

Residues 9 to 111 (QGFPGQQSVP…KPRPELDGPL (103 aa)) are disordered. The span at 12–31 (PGQQSVPGTLNFAVSPQKPR) shows a compositional bias: polar residues. Positions 33–45 (TSEAESETSMSEA) are enriched in low complexity. The segment covering 91-107 (QPRLSDLEVQPKPRPEL) has biased composition (basic and acidic residues).

The protein belongs to the SEC6 family.

May play a role as a mediator of inflammation and angiogenesis. The sequence is that of Tumor necrosis factor alpha-induced protein 2 (Tnfaip2) from Mus musculus (Mouse).